A 304-amino-acid polypeptide reads, in one-letter code: Protoheme IX farnesyltransferase 2 (304 aa).

9 helical membrane-spanning segments follow: residues 28-48, 50-70, 98-118, 122-142, 150-170, 176-196, 223-243, 245-265, and 282-302; these read VVAL…VVDF, WLQA…AAAF, ISVA…LYAL, LTAW…TMYL, IVIA…AVTG, AWLL…AIAI, ILLY…VGMV, SVYL…AWKL, and IYHL…GLFF.

Belongs to the UbiA prenyltransferase family. Protoheme IX farnesyltransferase subfamily.

It localises to the cell inner membrane. It catalyses the reaction heme b + (2E,6E)-farnesyl diphosphate + H2O = Fe(II)-heme o + diphosphate. The protein operates within porphyrin-containing compound metabolism; heme O biosynthesis; heme O from protoheme: step 1/1. Its function is as follows. Converts heme B (protoheme IX) to heme O by substitution of the vinyl group on carbon 2 of heme B porphyrin ring with a hydroxyethyl farnesyl side group. The polypeptide is Protoheme IX farnesyltransferase 2 (Vibrio campbellii (strain ATCC BAA-1116)).